Consider the following 89-residue polypeptide: Small ribosomal subunit protein uS19 (89 aa).

It belongs to the universal ribosomal protein uS19 family.

Its function is as follows. Protein S19 forms a complex with S13 that binds strongly to the 16S ribosomal RNA. The polypeptide is Small ribosomal subunit protein uS19 (Brachyspira hyodysenteriae (strain ATCC 49526 / WA1)).